The sequence spans 236 residues: Eukaryotic translation initiation factor 3 subunit J (236 aa).

Positions 1–86 (MADDWESAAD…KEEEEQKRLA (86 aa)) are disordered. A compositionally biased stretch (acidic residues) spans 28–46 (GEDDDEDVKESWEDEEEKK). 2 stretches are compositionally biased toward basic and acidic residues: residues 47-58 (DEEKPTKTEAPV) and 68-86 (AKLE…KRLA). Positions 61–115 (KPNKALKAKLEEQERLKEEEEQKRLAEMTPEEKLAEKLRLQKIQEESDLKSALET) form a coiled coil.

The protein belongs to the eIF-3 subunit J family. In terms of assembly, component of the eukaryotic translation initiation factor 3 (eIF-3) complex. The eIF-3 complex interacts with pix.

It is found in the cytoplasm. In terms of biological role, component of the eukaryotic translation initiation factor 3 (eIF-3) complex, which is involved in protein synthesis of a specialized repertoire of mRNAs and, together with other initiation factors, stimulates binding of mRNA and methionyl-tRNAi to the 40S ribosome. The eIF-3 complex specifically targets and initiates translation of a subset of mRNAs involved in cell proliferation. The sequence is that of Eukaryotic translation initiation factor 3 subunit J from Drosophila mojavensis (Fruit fly).